Reading from the N-terminus, the 925-residue chain is NADH:fumarate oxidoreductase (925 aa).

Thr-447 carries the FMN phosphoryl threonine modification. 7 residues coordinate FAD: Ala-492, Glu-511, Asn-519, Thr-520, Ala-525, Gly-526, and Val-633. Ala-525 contacts fumarate. Ala-525 provides a ligand contact to succinate. His-719, Ser-731, and Glu-732 together coordinate succinate. Ser-731 and Glu-732 together coordinate fumarate. Arg-756 serves as the catalytic Proton donor. His-859 is a fumarate binding site. Succinate is bound at residue His-859. FAD-binding residues include His-860 and Glu-889. Residues Arg-899 and Gly-902 each coordinate fumarate. Succinate contacts are provided by Arg-899 and Gly-902. FAD is bound by residues Ala-904 and Val-905.

It belongs to the FAD-dependent oxidoreductase 2 family. FRD/SDH subfamily. Monomer. It depends on FAD as a cofactor. FMN serves as cofactor. In terms of processing, is flavinylated on Thr-447 by ApbE2, encoded in a neighboring gene. Flavinylation is essential for catalytic activity.

It is found in the cytoplasm. The enzyme catalyses succinate + NAD(+) = fumarate + NADH + H(+). Catalyzes the anaerobic reduction of fumarate to succinate. Uses NADH as the inherent electron donor in this process. Is involved in anaerobic fumarate respiration in K.pneumoniae. The protein is NADH:fumarate oxidoreductase of Klebsiella pneumoniae (strain 342).